Here is a 184-residue protein sequence, read N- to C-terminus: GTP cyclohydrolase 1 (184 aa).

The Zn(2+) site is built by C75, H78, and C146.

The protein belongs to the GTP cyclohydrolase I family. Homomer.

It catalyses the reaction GTP + H2O = 7,8-dihydroneopterin 3'-triphosphate + formate + H(+). It participates in cofactor biosynthesis; 7,8-dihydroneopterin triphosphate biosynthesis; 7,8-dihydroneopterin triphosphate from GTP: step 1/1. This chain is GTP cyclohydrolase 1, found in Streptococcus pneumoniae (strain Taiwan19F-14).